A 359-amino-acid chain; its full sequence is Protein FAM50 homolog (359 aa).

Disordered stretches follow at residues Asn-122 to Pro-150 and Pro-339 to Lys-359. Residues Leu-123 to Asp-136 are compositionally biased toward acidic residues. The span at His-137 to Pro-150 shows a compositional bias: basic and acidic residues.

Belongs to the FAM50 family.

In Drosophila melanogaster (Fruit fly), this protein is Protein FAM50 homolog.